Consider the following 314-residue polypeptide: Protein OPG185 (314 aa).

An N-terminal signal peptide occupies residues 1-16 (MTRLPILLLLISLVYA). Residues 17-121 (TPFPQTSKKI…NDTDKVDYEE (105 aa)) form the Ig-like V-type domain. Residues 17-278 (TPFPQTSKKI…SNYKTKDFVE (262 aa)) lie on the Virion surface side of the membrane. Cysteines 34 and 103 form a disulfide. 4 N-linked (GlcNAc...) asparagine; by host glycosylation sites follow: Asn37, Asn69, Asn112, and Asn161. The segment covering 193 to 202 (NTVSASSGES) has biased composition (polar residues). The segment at 193–214 (NTVSASSGESTTDETPEPITDK) is disordered. Asn253 carries N-linked (GlcNAc...) asparagine; by host glycosylation. Residues 279 to 302 (IFGITALIILSAVAIFCITYYIYN) traverse the membrane as a helical segment. The Intravirion segment spans residues 303-314 (KRSRKYKTENKV).

This sequence belongs to the orthopoxvirus OPG185 family. In terms of assembly, heterodimerizes with OPG040. The heterodimer OPG185-OPG040 interacts with components of the entry fusion complex OPG143 and OPG094. Heterodimer with C3/VPC protein; disulfide-linked. Post-translationally, glycosylated; contains phosphate and sulfate-substituted glycans. O-glycosylation is required for hemagglutination and hemadsorption activities of infected cell membranes.

It localises to the virion membrane. The protein localises to the host membrane. In terms of biological role, prevents cell to cell fusion by interacting with and directing the viral OPG040 protein on the host plasma membrane. The OPG185-OPG040 complex associates with components of the entry fusion complex (EFC) presumably to avoid superinfection and syncytium formation. Via its interaction with C3/VCP protein, protects the infected cell and probably also the extracellular enveloped virus from complement attack. The chain is Protein OPG185 (OPG185) from Bos taurus (Bovine).